The chain runs to 267 residues: Orotidine 5'-phosphate decarboxylase (267 aa).

Lys-93 serves as the catalytic Proton donor.

Belongs to the OMP decarboxylase family. Type 2 subfamily.

It catalyses the reaction orotidine 5'-phosphate + H(+) = UMP + CO2. Its pathway is pyrimidine metabolism; UMP biosynthesis via de novo pathway; UMP from orotate: step 2/2. This chain is Orotidine 5'-phosphate decarboxylase, found in Halobacterium salinarum (strain ATCC 29341 / DSM 671 / R1).